The primary structure comprises 498 residues: Glycerol kinase (498 aa).

Threonine 11 provides a ligand contact to ADP. The ATP site is built by threonine 11, serine 12, and serine 13. Threonine 11 serves as a coordination point for sn-glycerol 3-phosphate. Arginine 15 lines the ADP pocket. The sn-glycerol 3-phosphate site is built by arginine 81, glutamate 82, tyrosine 133, and aspartate 242. Arginine 81, glutamate 82, tyrosine 133, aspartate 242, and glutamine 243 together coordinate glycerol. Residues threonine 264 and glycine 307 each contribute to the ADP site. Threonine 264, glycine 307, glutamine 311, and glycine 408 together coordinate ATP. Residues glycine 408 and asparagine 412 each coordinate ADP.

Belongs to the FGGY kinase family.

The enzyme catalyses glycerol + ATP = sn-glycerol 3-phosphate + ADP + H(+). It participates in polyol metabolism; glycerol degradation via glycerol kinase pathway; sn-glycerol 3-phosphate from glycerol: step 1/1. With respect to regulation, inhibited by fructose 1,6-bisphosphate (FBP). Its function is as follows. Key enzyme in the regulation of glycerol uptake and metabolism. Catalyzes the phosphorylation of glycerol to yield sn-glycerol 3-phosphate. This is Glycerol kinase from Ralstonia nicotianae (strain ATCC BAA-1114 / GMI1000) (Ralstonia solanacearum).